A 261-amino-acid polypeptide reads, in one-letter code: Acetylglutamate kinase (261 aa).

Substrate contacts are provided by residues 45-46, Arg67, and Asn162; that span reads GG.

It belongs to the acetylglutamate kinase family. ArgB subfamily.

The protein localises to the cytoplasm. It catalyses the reaction N-acetyl-L-glutamate + ATP = N-acetyl-L-glutamyl 5-phosphate + ADP. Its pathway is amino-acid biosynthesis; L-arginine biosynthesis; N(2)-acetyl-L-ornithine from L-glutamate: step 2/4. In terms of biological role, catalyzes the ATP-dependent phosphorylation of N-acetyl-L-glutamate. The protein is Acetylglutamate kinase of Bacteroides fragilis (strain ATCC 25285 / DSM 2151 / CCUG 4856 / JCM 11019 / LMG 10263 / NCTC 9343 / Onslow / VPI 2553 / EN-2).